Consider the following 546-residue polypeptide: Chaperonin GroEL (546 aa).

ATP is bound by residues T29–P32, K50, D86–T90, G414, and D492.

This sequence belongs to the chaperonin (HSP60) family. Forms a cylinder of 14 subunits composed of two heptameric rings stacked back-to-back. Interacts with the co-chaperonin GroES.

The protein resides in the cytoplasm. It catalyses the reaction ATP + H2O + a folded polypeptide = ADP + phosphate + an unfolded polypeptide.. Functionally, together with its co-chaperonin GroES, plays an essential role in assisting protein folding. The GroEL-GroES system forms a nano-cage that allows encapsulation of the non-native substrate proteins and provides a physical environment optimized to promote and accelerate protein folding. The chain is Chaperonin GroEL from Helicobacter pylori (strain HPAG1).